A 134-amino-acid polypeptide reads, in one-letter code: Small ribosomal subunit protein uS9c (134 aa).

This sequence belongs to the universal ribosomal protein uS9 family.

Its subcellular location is the plastid. The protein resides in the chloroplast. The polypeptide is Small ribosomal subunit protein uS9c (rps9) (Euglena gracilis).